Reading from the N-terminus, the 145-residue chain is Maximins 3/H11 type 3 (145 aa).

An N-terminal signal peptide occupies residues 1–18 (MNFKYIVAVSFLIASAYA). Propeptides lie at residues 19 to 43 (RSVQ…LREI) and 75 to 122 (TAEE…TKKE). Residue Ile144 is modified to Isoleucine amide.

It belongs to the bombinin family. As to expression, expressed by the skin glands.

Its subcellular location is the secreted. Maximin-3 shows antibacterial activity against both Gram-positive and Gram-negative bacteria. It also shows antimicrobial activity against the fungus C.albicans, but not against A.flavus nor P.uticale. It has little hemolytic activity. It possess a significant cytotoxicity against tumor cell lines. It possess a significant anti-HIV activity. It shows high spermicidal activity. In terms of biological role, maximin-H11 shows antimicrobial activity against bacteria and against the fungus C.albicans. Shows strong hemolytic activity. In Bombina maxima (Giant fire-bellied toad), this protein is Maximins 3/H11 type 3.